Here is a 336-residue protein sequence, read N- to C-terminus: 3-isopropylmalate dehydrogenase (336 aa).

4 residues coordinate substrate: Arg87, Arg97, Arg121, and Asp211. The Mg(2+) site is built by Asp211, Asp235, and Asp239. 271-283 is a binding site for NAD(+); it reads GSAPDIAGQGIAD.

This sequence belongs to the isocitrate and isopropylmalate dehydrogenases family. LeuB type 2 subfamily. In terms of assembly, homodimer. Requires Mg(2+) as cofactor. Mn(2+) serves as cofactor.

It is found in the cytoplasm. It catalyses the reaction (2R,3S)-3-isopropylmalate + NAD(+) = 4-methyl-2-oxopentanoate + CO2 + NADH. Its pathway is amino-acid biosynthesis; L-leucine biosynthesis; L-leucine from 3-methyl-2-oxobutanoate: step 3/4. In terms of biological role, catalyzes the oxidation of 3-carboxy-2-hydroxy-4-methylpentanoate (3-isopropylmalate) to 3-carboxy-4-methyl-2-oxopentanoate. The product decarboxylates to 4-methyl-2 oxopentanoate. This chain is 3-isopropylmalate dehydrogenase, found in Rhodococcus opacus (strain B4).